Consider the following 967-residue polypeptide: Translation initiation factor IF-2 (967 aa).

Positions 34 to 363 (ASSTVEPPVA…APAVGGVSVP (330 aa)) are disordered. 2 stretches are compositionally biased toward low complexity: residues 51–96 (PAGG…GNAA) and 103–154 (ASEA…TPGP). Residues 184–196 (RSEGGAQRGGPRP) show a composition bias toward gly residues. A compositionally biased stretch (low complexity) spans 197–206 (GGQQRSGKPG). The span at 300–333 (PRRGGGPGGGPGGGGGFRGRGGRGGTQGAFGRGG) shows a compositional bias: gly residues. The segment covering 334-345 (ARGKHRKSKRAK) has biased composition (basic residues). The region spanning 460–632 (PRPPVVTVMG…IVLTADGALE (173 aa)) is the tr-type G domain. The segment at 469 to 476 (GHVDHGKT) is G1. Residue 469–476 (GHVDHGKT) participates in GTP binding. Positions 494 to 498 (GITQH) are G2. A G3 region spans residues 519 to 522 (DTPG). Residues 519 to 523 (DTPGH) and 573 to 576 (NKVD) each bind GTP. The G4 stretch occupies residues 573-576 (NKVD). Residues 609–611 (SAR) are G5.

This sequence belongs to the TRAFAC class translation factor GTPase superfamily. Classic translation factor GTPase family. IF-2 subfamily.

The protein resides in the cytoplasm. In terms of biological role, one of the essential components for the initiation of protein synthesis. Protects formylmethionyl-tRNA from spontaneous hydrolysis and promotes its binding to the 30S ribosomal subunits. Also involved in the hydrolysis of GTP during the formation of the 70S ribosomal complex. The protein is Translation initiation factor IF-2 of Kocuria rhizophila (strain ATCC 9341 / DSM 348 / NBRC 103217 / DC2201).